A 444-amino-acid polypeptide reads, in one-letter code: Guanosine nucleotide diphosphate dissociation inhibitor 2 (444 aa).

Belongs to the Rab GDI family. Expressed in roots and floral buds.

Functionally, regulates the GDP/GTP exchange reaction of most RAB proteins by inhibiting the dissociation of GDP from them, and the subsequent binding of GTP. The sequence is that of Guanosine nucleotide diphosphate dissociation inhibitor 2 (GDI2) from Arabidopsis thaliana (Mouse-ear cress).